Consider the following 155-residue polypeptide: Ribosomal RNA large subunit methyltransferase H (155 aa).

Residues glycine 104 and 123 to 128 (FGNITL) contribute to the S-adenosyl-L-methionine site.

This sequence belongs to the RNA methyltransferase RlmH family. Homodimer.

It is found in the cytoplasm. The catalysed reaction is pseudouridine(1915) in 23S rRNA + S-adenosyl-L-methionine = N(3)-methylpseudouridine(1915) in 23S rRNA + S-adenosyl-L-homocysteine + H(+). Functionally, specifically methylates the pseudouridine at position 1915 (m3Psi1915) in 23S rRNA. This chain is Ribosomal RNA large subunit methyltransferase H, found in Mesoplasma florum (strain ATCC 33453 / NBRC 100688 / NCTC 11704 / L1) (Acholeplasma florum).